Reading from the N-terminus, the 99-residue chain is NADH-quinone oxidoreductase subunit K (99 aa).

Helical transmembrane passes span 3–23 (PTYY…GVLV), 28–48 (IVVF…LVTF), and 59–79 (VMAF…LAII).

The protein belongs to the complex I subunit 4L family. In terms of assembly, NDH-1 is composed of 14 different subunits. Subunits NuoA, H, J, K, L, M, N constitute the membrane sector of the complex.

The protein localises to the cell membrane. It carries out the reaction a quinone + NADH + 5 H(+)(in) = a quinol + NAD(+) + 4 H(+)(out). NDH-1 shuttles electrons from NADH, via FMN and iron-sulfur (Fe-S) centers, to quinones in the respiratory chain. The immediate electron acceptor for the enzyme in this species is believed to be a menaquinone. Couples the redox reaction to proton translocation (for every two electrons transferred, four hydrogen ions are translocated across the cytoplasmic membrane), and thus conserves the redox energy in a proton gradient. This chain is NADH-quinone oxidoreductase subunit K, found in Saccharopolyspora erythraea (strain ATCC 11635 / DSM 40517 / JCM 4748 / NBRC 13426 / NCIMB 8594 / NRRL 2338).